The sequence spans 228 residues: Cytidylate kinase (228 aa).

ATP is bound at residue 17–25 (GPSASGKGT).

Belongs to the cytidylate kinase family. Type 1 subfamily.

It localises to the cytoplasm. The catalysed reaction is CMP + ATP = CDP + ADP. The enzyme catalyses dCMP + ATP = dCDP + ADP. This is Cytidylate kinase from Paraburkholderia phytofirmans (strain DSM 17436 / LMG 22146 / PsJN) (Burkholderia phytofirmans).